Here is a 407-residue protein sequence, read N- to C-terminus: P2X receptor D (407 aa).

Residues 1–22 (MDWDNIFSYNTAKIVTIKDRRL) lie on the Cytoplasmic side of the membrane. A helical transmembrane segment spans residues 23 to 43 (GGLHIIFMVLIIVYIVIYSTI). Residues 44–300 (YKKGYLLTET…IQNGEIGSFN (257 aa)) are Lumenal-facing. The segment at 283–296 (RHGIRLIFIQNGEI) is pore-forming motif. The helical transmembrane segment at 301 to 321 (FQALLLTFVSGLGLLAISTVL) threads the bilayer. Residues 322–407 (VDQLAIRFLP…QNIQNNNIIL (86 aa)) are Cytoplasmic-facing. The disordered stretch occupies residues 371-394 (KNNENNNNNDDYNDDDNEIFDDNN). Residues 381 to 391 (DYNDDDNEIFD) show a composition bias toward acidic residues.

It belongs to the P2X receptor family.

The protein localises to the contractile vacuole membrane. Functionally, P2X receptors are ligand-gated ion channels that play a role in intracellular calcium signaling. ATP does not evoke inward currents in p2xD. Not essential for osmoregulation. The chain is P2X receptor D (p2xD) from Dictyostelium discoideum (Social amoeba).